The sequence spans 488 residues: Integrin beta-like protein 1 (488 aa).

An N-terminal signal peptide occupies residues M1 to A21. 40 disulfides stabilise this stretch: C38/C65, C49/C63, C57/C68, C70/C83, C85/C106, C90/C104, C98/C109, C111/C120, C126/C153, C137/C151, C145/C156, C158/C172, C174/C196, C179/C194, C188/C199, C201/C210, C214/C241, C225/C239, C233/C244, C246/C263, C265/C290, C270/C288, C282/C293, C295/C304, C310/C337, C321/C335, C329/C340, C342/C355, C357/C378, C362/C376, C370/C381, C383/C392, C398/C425, C409/C423, C417/C428, C430/C442, C444/C465, C449/C463, C457/C468, and C470/C479. I-EGF domains are found at residues C38–E84, C85–Q121, C126–E173, C174–E211, C214–E264, C265–E305, C310–E356, C357–Q393, C398–E443, and C444–E480. The I repeat unit spans residues C49 to V89. The cysteine-rich tandem repeats stretch occupies residues C49–P488. The II repeat unit spans residues C90–M136. An III repeat occupies C137–E178. An IV repeat occupies C179 to R224. The stretch at C225–N269 is one V repeat. Residues C270–K320 form a VI repeat. The stretch at C321–Q361 is one VII repeat. Residues C362–Q408 form a VIII repeat. A glycan (N-linked (GlcNAc...) asparagine) is linked at N399. The stretch at C409–D448 is one IX repeat. Residues C449–P488 form a X repeat.

It localises to the secreted. The protein is Integrin beta-like protein 1 (itgbl1) of Xenopus laevis (African clawed frog).